Reading from the N-terminus, the 236-residue chain is Small ribosomal subunit protein uS3 (236 aa).

The KH type-2 domain maps to 39-107 (IREFLTEELK…DTSLNIVEVR (69 aa)). Positions 214-236 (ASERRAVEGDNQGSSSNRRRENA) are disordered.

It belongs to the universal ribosomal protein uS3 family. As to quaternary structure, part of the 30S ribosomal subunit. Forms a tight complex with proteins S10 and S14.

In terms of biological role, binds the lower part of the 30S subunit head. Binds mRNA in the 70S ribosome, positioning it for translation. The polypeptide is Small ribosomal subunit protein uS3 (Brucella melitensis biotype 1 (strain ATCC 23456 / CCUG 17765 / NCTC 10094 / 16M)).